The following is a 525-amino-acid chain: Cytochrome P450 monooxygenase tpcC (525 aa).

A helical transmembrane segment spans residues 13–33 (LPVTLVSLLVGSIFYFCYLTV). Cysteine 457 contacts heme.

It belongs to the cytochrome P450 family. Heme serves as cofactor.

It localises to the membrane. The protein operates within secondary metabolite biosynthesis; terpenoid biosynthesis. Functionally, cytochrome P450 monooxygenase; part of the gene cluster that mediates the biosynthesis of terpestacin. The bifunctional terpene synthase tpcA converts isopentenyl diphosphate (IPP) and dimethylallyl diphosphate (DMAPP) into the sesterterpene preterpestacin I. The C-terminal prenyltransferase (PT) domain of tpcA catalyzes formation of GFPP, whereas the N-terminal terpene cyclase (TC) domain catalyzes the cyclization of GFPP into preterpestacin I. The cytochrome P450 monooxygenase tpcB then hydroxylates preterpestacin I to yield 24-hydroxypreterpstacin I (renamed as preterpestacin II) whereas the cytochrome P450 monooxygenase tpcC further hydroxylates preterpestacin II to yield 16,17-dihydroxypreterpestacin II (renamed as preterpestacin III). Finally, the FAD-dependent monooxygenase tpcD converts preterpestacin III into terpestacin. In Cochliobolus heterostrophus (strain C5 / ATCC 48332 / race O) (Southern corn leaf blight fungus), this protein is Cytochrome P450 monooxygenase tpcC.